The primary structure comprises 240 residues: DUP240 protein DFP1 (240 aa).

The disordered stretch occupies residues 1-29; that stretch reads MQPYLKKNTHATDDPKASPLKEGSPDNPE. Helical transmembrane passes span 61 to 81 and 84 to 104; these read IMIN…DIWF and VLSP…VLQI.

This sequence belongs to the DUP/COS family.

The protein localises to the membrane. The polypeptide is DUP240 protein DFP1 (Saccharomyces cerevisiae (Baker's yeast)).